We begin with the raw amino-acid sequence, 628 residues long: 1-deoxy-D-xylulose-5-phosphate synthase (628 aa).

Thiamine diphosphate-binding positions include His-72 and 113 to 115 (GHS). Asp-144 lines the Mg(2+) pocket. Thiamine diphosphate is bound by residues 145-146 (GA), Asn-173, Tyr-284, and Glu-363. Mg(2+) is bound at residue Asn-173.

Belongs to the transketolase family. DXPS subfamily. In terms of assembly, homodimer. The cofactor is Mg(2+). Requires thiamine diphosphate as cofactor.

The enzyme catalyses D-glyceraldehyde 3-phosphate + pyruvate + H(+) = 1-deoxy-D-xylulose 5-phosphate + CO2. Its pathway is metabolic intermediate biosynthesis; 1-deoxy-D-xylulose 5-phosphate biosynthesis; 1-deoxy-D-xylulose 5-phosphate from D-glyceraldehyde 3-phosphate and pyruvate: step 1/1. Functionally, catalyzes the acyloin condensation reaction between C atoms 2 and 3 of pyruvate and glyceraldehyde 3-phosphate to yield 1-deoxy-D-xylulose-5-phosphate (DXP). This chain is 1-deoxy-D-xylulose-5-phosphate synthase, found in Brevibacillus brevis (strain 47 / JCM 6285 / NBRC 100599).